A 337-amino-acid chain; its full sequence is Ketol-acid reductoisomerase (NADP(+)) (337 aa).

The KARI N-terminal Rossmann domain occupies 1–180; that stretch reads MKIYYDTDVN…GGGRAGIIET (180 aa). NADP(+) contacts are provided by residues 24-27, Arg47, Ser51, and 81-84; these read YGSQ and DELQ. His106 is a catalytic residue. Gly132 is a binding site for NADP(+). The 146-residue stretch at 181–326 folds into the KARI C-terminal knotted domain; sequence TFKDETETDL…EKLRAMMPWL (146 aa). Mg(2+)-binding residues include Asp189, Glu193, Glu225, and Glu229. A substrate-binding site is contributed by Ser250.

This sequence belongs to the ketol-acid reductoisomerase family. The cofactor is Mg(2+).

It catalyses the reaction (2R)-2,3-dihydroxy-3-methylbutanoate + NADP(+) = (2S)-2-acetolactate + NADPH + H(+). It carries out the reaction (2R,3R)-2,3-dihydroxy-3-methylpentanoate + NADP(+) = (S)-2-ethyl-2-hydroxy-3-oxobutanoate + NADPH + H(+). It functions in the pathway amino-acid biosynthesis; L-isoleucine biosynthesis; L-isoleucine from 2-oxobutanoate: step 2/4. It participates in amino-acid biosynthesis; L-valine biosynthesis; L-valine from pyruvate: step 2/4. Functionally, involved in the biosynthesis of branched-chain amino acids (BCAA). Catalyzes an alkyl-migration followed by a ketol-acid reduction of (S)-2-acetolactate (S2AL) to yield (R)-2,3-dihydroxy-isovalerate. In the isomerase reaction, S2AL is rearranged via a Mg-dependent methyl migration to produce 3-hydroxy-3-methyl-2-ketobutyrate (HMKB). In the reductase reaction, this 2-ketoacid undergoes a metal-dependent reduction by NADPH to yield (R)-2,3-dihydroxy-isovalerate. The sequence is that of Ketol-acid reductoisomerase (NADP(+)) from Thermodesulfovibrio yellowstonii (strain ATCC 51303 / DSM 11347 / YP87).